A 455-amino-acid polypeptide reads, in one-letter code: Adenylyltransferase and sulfurtransferase MOCS3 (455 aa).

ATP-binding positions include G90, D111, 118–122 (SNLAR), K135, and 179–180 (DN). The tract at residues 156 to 236 (AQALTPATAL…RPPPAETVTS (81 aa)) is interaction with NFS1. Zn(2+) contacts are provided by C220 and C223. The active-site Glycyl thioester intermediate; for adenylyltransferase activity is the C237. Residues C295 and C298 each contribute to the Zn(2+) site. C314 and C322 are joined by a disulfide. The region spanning 345–453 (SRSPHLLLDV…WAAKIDGTFP (109 aa)) is the Rhodanese domain. C410 (cysteine persulfide intermediate; for sulfurtransferase activity) is an active-site residue. Position 410 is a cysteine persulfide (C410).

The protein in the N-terminal section; belongs to the HesA/MoeB/ThiF family. UBA4 subfamily. Interacts with NFS1. Requires Zn(2+) as cofactor.

It localises to the cytoplasm. The protein localises to the cytosol. The catalysed reaction is [molybdopterin-synthase sulfur-carrier protein]-C-terminal Gly-Gly + ATP + H(+) = [molybdopterin-synthase sulfur-carrier protein]-C-terminal Gly-Gly-AMP + diphosphate. The enzyme catalyses [molybdopterin-synthase sulfur-carrier protein]-C-terminal Gly-Gly-AMP + S-sulfanyl-L-cysteinyl-[cysteine desulfurase] + AH2 = [molybdopterin-synthase sulfur-carrier protein]-C-terminal-Gly-aminoethanethioate + L-cysteinyl-[cysteine desulfurase] + A + AMP + 2 H(+). Its pathway is tRNA modification; 5-methoxycarbonylmethyl-2-thiouridine-tRNA biosynthesis. The protein operates within cofactor biosynthesis; molybdopterin biosynthesis. Plays a central role in 2-thiolation of mcm(5)S(2)U at tRNA wobble positions of cytosolic tRNA(Lys), tRNA(Glu) and tRNA(Gln). Also essential during biosynthesis of the molybdenum cofactor. Acts by mediating the C-terminal thiocarboxylation of sulfur carriers URM1 and MOCS2A. Its N-terminus first activates URM1 and MOCS2A as acyl-adenylates (-COAMP), then the persulfide sulfur on the catalytic cysteine is transferred to URM1 and MOCS2A to form thiocarboxylation (-COSH) of their C-terminus. The reaction probably involves hydrogen sulfide that is generated from the persulfide intermediate and that acts as a nucleophile towards URM1 and MOCS2A. Subsequently, a transient disulfide bond is formed. Does not use thiosulfate as sulfur donor; NFS1 acting as a sulfur donor for thiocarboxylation reactions. The protein is Adenylyltransferase and sulfurtransferase MOCS3 of Bos taurus (Bovine).